The sequence spans 1269 residues: Regulator of nonsense transcripts 2 (1269 aa).

Disordered stretches follow at residues 1–125 and 143–162; these read MPAE…EKEE and LRSK…FFSR. A coiled-coil region spans residues 57–133; that stretch reads KKRLEEDKRK…EESLQLHQEA (77 aa). Residues 94–132 form a sufficient for interaction with UPF1 region; that stretch reads KKKQEEEERKKQEEQAKRQQEEAAAQLKEKEESLQLHQE. Residues 168–396 enclose the MIF4G 1 domain; the sequence is KKNTAFVKKL…KGELSEDRHK (229 aa). Disordered regions lie at residues 422 to 444 and 487 to 518; these read NMPD…DIFT and KSQN…DLEL. Composition is skewed to basic and acidic residues over residues 427 to 438 and 487 to 511; these read PQDKPTPEEHGP and KSQN…KEAS. MIF4G domains follow at residues 571-755 and 774-984; these read QQLP…YCNP and RKLL…LRPK. The sufficient for interaction with UPF3A and UPF3B stretch occupies residues 709 to 926; it reads GRFLFRSPES…IRLVCTILDT (218 aa). A sufficient for interaction with EIF4A1 and EIF1 region spans residues 755–1269; sequence PPPAEKTVRK…LIFKTGGRRR (515 aa). Residues 837-857 are binds to UPF3B; the sequence is EDVGIHVVDGVLEDIRLGMEV. Residues 1017–1090 form a disordered region; that stretch reads SKDSMTEGEN…KENETDEENA (74 aa). Positions 1025–1073 are enriched in acidic residues; it reads ENLEEDEEEEEGGAETEEQSGNESEVNEPEEEEGSEEEEEGEEEEEENT. Residues 1081 to 1269 form a sufficient for interaction with UPF1 C-terminus region; that stretch reads KENETDEENA…LIFKTGGRRR (189 aa). A Phosphothreonine modification is found at Thr1085. 2 interaction with UPF1 regions span residues 1102–1126 and 1164–1204; these read VPCV…QQRS and DTMP…AEQE. Positions 1102–1195 are necessary for interaction with UPF1; sequence VPCVEDEDFI…PMSSQLAANH (94 aa). The tract at residues 1218–1269 is disordered; sequence ERQEQEDYQEMLQSLAQRPAPANTNRERRPRYQHPKGAPNADLIFKTGGRRR.

In terms of assembly, found in a post-splicing messenger ribonucleoprotein (mRNP) complex. Associates with the exon junction complex (EJC). Interacts with SMG1, EST1A, UPF3A, UPF3B, EIF4A1 and EIF1. Interacts with UPF1; interaction is promoted by TDRD6. Interacts with DDX4. Localized in male germ cells.

The protein resides in the cytoplasm. It is found in the perinuclear region. In terms of biological role, involved in nonsense-mediated decay (NMD) of mRNAs containing premature stop codons by associating with the nuclear exon junction complex (EJC). Recruited by UPF3B associated with the EJC core at the cytoplasmic side of the nuclear envelope and the subsequent formation of an UPF1-UPF2-UPF3 surveillance complex (including UPF1 bound to release factors at the stalled ribosome) is believed to activate NMD. In cooperation with UPF3B stimulates both ATPase and RNA helicase activities of UPF1. Binds spliced mRNA. This is Regulator of nonsense transcripts 2 from Mus musculus (Mouse).